We begin with the raw amino-acid sequence, 575 residues long: SH2B adapter protein 3 (575 aa).

3 disordered regions span residues 1–23 (MNGP…AAAP), 83–136 (RAPG…CSFQ), and 150–176 (SAGE…PARP). Residue Ser-13 is modified to Phosphoserine. Residues 83 to 93 (RAPGRDYRDTG) show a composition bias toward basic and acidic residues. The span at 95–104 (GPPAKAEASP) shows a compositional bias: low complexity. A phosphoserine mark is found at Ser-103, Ser-120, and Ser-150. Residues 152-174 (GELPAAHTAAAPGTPGEAAETPA) show a composition bias toward low complexity. Residues 194–307 (EALKEAVLRY…WMAELSECTG (114 aa)) form the PH domain. A disordered region spans residues 322 to 346 (ALEPSTSSSPRGSTDSLNQGASPGG). The span at 325-337 (PSTSSSPRGSTDS) shows a compositional bias: low complexity. The residue at position 330 (Ser-330) is a Phosphoserine. The SH2 domain maps to 364–462 (WFHGPISRVK…ACDVRLSSYV (99 aa)). Disordered regions lie at residues 503–525 (SSGC…PEQI) and 546–575 (PVNR…YTPL).

Belongs to the SH2B adapter family. As to quaternary structure, binds to the tyrosine-phosphorylated TCR zeta chain via its SH2 domain. In terms of processing, tyrosine phosphorylated by LCK. As to expression, preferentially expressed by lymphoid cell lines.

In terms of biological role, links T-cell receptor activation signal to phospholipase C-gamma-1, GRB2 and phosphatidylinositol 3-kinase. In Homo sapiens (Human), this protein is SH2B adapter protein 3 (SH2B3).